The primary structure comprises 592 residues: Arginine--tRNA ligase (592 aa).

Residues 128–138 (ANPTGPLHVGH) carry the 'HIGH' region motif.

The protein belongs to the class-I aminoacyl-tRNA synthetase family. In terms of assembly, monomer.

Its subcellular location is the cytoplasm. The enzyme catalyses tRNA(Arg) + L-arginine + ATP = L-arginyl-tRNA(Arg) + AMP + diphosphate. The chain is Arginine--tRNA ligase from Hydrogenovibrio crunogenus (strain DSM 25203 / XCL-2) (Thiomicrospira crunogena).